The primary structure comprises 508 residues: Light-independent protochlorophyllide reductase subunit B (508 aa).

Asp36 lines the [4Fe-4S] cluster pocket. The active-site Proton donor is Asp282. Substrate is bound at residue Gly417–Leu418.

Belongs to the ChlB/BchB/BchZ family. As to quaternary structure, protochlorophyllide reductase is composed of three subunits; BchL, BchN and BchB. Forms a heterotetramer of two BchB and two BchN subunits. [4Fe-4S] cluster serves as cofactor.

It catalyses the reaction chlorophyllide a + oxidized 2[4Fe-4S]-[ferredoxin] + 2 ADP + 2 phosphate = protochlorophyllide a + reduced 2[4Fe-4S]-[ferredoxin] + 2 ATP + 2 H2O. It participates in porphyrin-containing compound metabolism; bacteriochlorophyll biosynthesis (light-independent). In terms of biological role, component of the dark-operative protochlorophyllide reductase (DPOR) that uses Mg-ATP and reduced ferredoxin to reduce ring D of protochlorophyllide (Pchlide) to form chlorophyllide a (Chlide). This reaction is light-independent. The NB-protein (BchN-BchB) is the catalytic component of the complex. The polypeptide is Light-independent protochlorophyllide reductase subunit B (Methylocella silvestris (strain DSM 15510 / CIP 108128 / LMG 27833 / NCIMB 13906 / BL2)).